Here is a 429-residue protein sequence, read N- to C-terminus: Glutamyl-tRNA reductase (429 aa).

Residues 49-52 (TCNR), serine 108, 113-115 (EAQ), and glutamine 119 contribute to the substrate site. Residue cysteine 50 is the Nucleophile of the active site. 188-193 (GAGEMS) provides a ligand contact to NADP(+).

The protein belongs to the glutamyl-tRNA reductase family. In terms of assembly, homodimer.

The catalysed reaction is (S)-4-amino-5-oxopentanoate + tRNA(Glu) + NADP(+) = L-glutamyl-tRNA(Glu) + NADPH + H(+). Its pathway is porphyrin-containing compound metabolism; protoporphyrin-IX biosynthesis; 5-aminolevulinate from L-glutamyl-tRNA(Glu): step 1/2. In terms of biological role, catalyzes the NADPH-dependent reduction of glutamyl-tRNA(Glu) to glutamate 1-semialdehyde (GSA). In Rubrobacter xylanophilus (strain DSM 9941 / JCM 11954 / NBRC 16129 / PRD-1), this protein is Glutamyl-tRNA reductase.